A 227-amino-acid polypeptide reads, in one-letter code: UPF0758 protein Dhaf_4352 (227 aa).

An MPN domain is found at Val-105–Leu-227. His-176, His-178, and Asp-189 together coordinate Zn(2+). The short motif at His-176–Asp-189 is the JAMM motif element.

Belongs to the UPF0758 family.

This is UPF0758 protein Dhaf_4352 from Desulfitobacterium hafniense (strain DSM 10664 / DCB-2).